The primary structure comprises 199 residues: Recombination protein RecR (199 aa).

A C4-type zinc finger spans residues 57-72 (CQSCRTFTEQSLCPIC). Positions 81–176 (GVICVVETPA…IISRIAHGVP (96 aa)) constitute a Toprim domain.

It belongs to the RecR family.

Its function is as follows. May play a role in DNA repair. It seems to be involved in an RecBC-independent recombinational process of DNA repair. It may act with RecF and RecO. This chain is Recombination protein RecR, found in Shewanella denitrificans (strain OS217 / ATCC BAA-1090 / DSM 15013).